A 465-amino-acid chain; its full sequence is ATP synthase subunit beta (465 aa).

Position 152 to 159 (152 to 159 (GGAGVGKT)) interacts with ATP.

The protein belongs to the ATPase alpha/beta chains family. As to quaternary structure, F-type ATPases have 2 components, CF(1) - the catalytic core - and CF(0) - the membrane proton channel. CF(1) has five subunits: alpha(3), beta(3), gamma(1), delta(1), epsilon(1). CF(0) has three main subunits: a(1), b(2) and c(9-12). The alpha and beta chains form an alternating ring which encloses part of the gamma chain. CF(1) is attached to CF(0) by a central stalk formed by the gamma and epsilon chains, while a peripheral stalk is formed by the delta and b chains.

It is found in the cell inner membrane. It carries out the reaction ATP + H2O + 4 H(+)(in) = ADP + phosphate + 5 H(+)(out). Its function is as follows. Produces ATP from ADP in the presence of a proton gradient across the membrane. The catalytic sites are hosted primarily by the beta subunits. The chain is ATP synthase subunit beta from Campylobacter curvus (strain 525.92).